Here is a 577-residue protein sequence, read N- to C-terminus: Outer spore wall assembly protein SHE10 (577 aa).

Residues 1-23 (MGKLIKLITTLTVLVSLLQYCCE) form the signal peptide. Coiled coils occupy residues 379-416 (NETRSTLDELTNAMEKDLSEITDEIEKKVNAIREENVE) and 513-561 (ILRS…EEDV). The segment covering 525 to 545 (RERKERERKEREKAAAEEFQR) has biased composition (basic and acidic residues). The segment at 525–577 (RERKERERKEREKAAAEEFQRQQELLLQQEEEDEEDVSYTSTSTITTTTTMTL) is disordered. Residues 562-577 (SYTSTSTITTTTTMTL) show a composition bias toward low complexity.

The protein belongs to the SHE10 family. Component of the mitochondria-localized RNase mitochondrial RNA-processing (RNase MRP) composed of one single RNA encoded by the NME1 gene and at least 31 proteins. Absent in the nucleus-localized RNase MRP (NuMRP).

The protein localises to the mitochondrion. Its function is as follows. Involved in spore wall assembly. May be a component of the mitochondrial RNase MRP (MtMRP), a ribonucleoprotein endoribonuclease involved in the cleaving RNA transcripts to generate primers for DNA replication in mitochondria. This is Outer spore wall assembly protein SHE10 from Saccharomyces cerevisiae (strain JAY291) (Baker's yeast).